Consider the following 283-residue polypeptide: tRNA pseudouridine synthase B (283 aa).

Catalysis depends on Asp-38, which acts as the Nucleophile.

Belongs to the pseudouridine synthase TruB family. Type 1 subfamily.

The enzyme catalyses uridine(55) in tRNA = pseudouridine(55) in tRNA. Functionally, responsible for synthesis of pseudouridine from uracil-55 in the psi GC loop of transfer RNAs. The protein is tRNA pseudouridine synthase B of Aster yellows witches'-broom phytoplasma (strain AYWB).